The sequence spans 550 residues: Chaperonin GroEL (550 aa).

ATP contacts are provided by residues 30–33 (TLGP), lysine 51, 87–91 (DGTTT), glycine 415, 479–481 (NAA), and aspartate 495. The interval 526–550 (KDEKSDLGNSSAPSAGGMGGMGGMM) is disordered. A compositionally biased stretch (gly residues) spans 541 to 550 (GGMGGMGGMM).

This sequence belongs to the chaperonin (HSP60) family. Forms a cylinder of 14 subunits composed of two heptameric rings stacked back-to-back. Interacts with the co-chaperonin GroES.

The protein localises to the cytoplasm. The enzyme catalyses ATP + H2O + a folded polypeptide = ADP + phosphate + an unfolded polypeptide.. Its function is as follows. Together with its co-chaperonin GroES, plays an essential role in assisting protein folding. The GroEL-GroES system forms a nano-cage that allows encapsulation of the non-native substrate proteins and provides a physical environment optimized to promote and accelerate protein folding. The polypeptide is Chaperonin GroEL (Buchnera aphidicola subsp. Baizongia pistaciae (strain Bp)).